We begin with the raw amino-acid sequence, 369 residues long: 3 beta-hydroxysteroid dehydrogenase type 7 (369 aa).

Y159 functions as the Proton acceptor in the catalytic mechanism. K163 contacts NAD(+). 2 helical membrane-spanning segments follow: residues 289–309 (LLPYWLLVLLATLNALLQWLL) and 312–334 (LVLYTPLLNPYTLAMANTTFTVS).

The protein belongs to the 3-beta-HSD family. In terms of tissue distribution, predominantly expressed in liver.

It is found in the endoplasmic reticulum membrane. It carries out the reaction 7alpha-hydroxycholesterol + NAD(+) = 7alpha-hydroxycholest-4-en-3-one + NADH + H(+). The catalysed reaction is 7alpha,25-dihydroxycholesterol + NAD(+) = 7alpha,25-dihydroxy-4-cholesten-3-one + NADH + H(+). It catalyses the reaction (25R)-cholest-5-en-3beta,7alpha,26-triol + NAD(+) = (25R)-7alpha,26-dihydroxycholest-4-en-3-one + NADH + H(+). The enzyme catalyses (24S)-7alpha-dihydroxycholesterol + NAD(+) = (24S)-7alpha,24-dihydroxycholest-4-en-3-one + NADH + H(+). It participates in lipid metabolism; steroid biosynthesis. Its function is as follows. The 3-beta-HSD enzymatic system plays a crucial role in the biosynthesis of all classes of hormonal steroids. HSD VII is active against four 7-alpha-hydroxylated sterols. Does not metabolize several different C(19/21) steroids as substrates. Involved in bile acid synthesis. Plays a key role in cell positioning and movement in lymphoid tissues by mediating degradation of 7-alpha,25-dihydroxycholesterol (7-alpha,25-OHC): 7-alpha,25-OHC acts as a ligand for the G protein-coupled receptor GPR183/EBI2, a chemotactic receptor for a number of lymphoid cells. This Mus musculus (Mouse) protein is 3 beta-hydroxysteroid dehydrogenase type 7.